A 357-amino-acid polypeptide reads, in one-letter code: tRNA-specific 2-thiouridylase MnmA (357 aa).

ATP-binding positions include 11–18 (AMSGGVDS) and L37. The Nucleophile role is filled by C102. A disulfide bridge links C102 with C197. Position 126 (G126) interacts with ATP. Positions 148–150 (KDQ) are interaction with tRNA. C197 functions as the Cysteine persulfide intermediate in the catalytic mechanism. The interval 301–302 (RY) is interaction with tRNA.

It belongs to the MnmA/TRMU family.

It localises to the cytoplasm. The catalysed reaction is S-sulfanyl-L-cysteinyl-[protein] + uridine(34) in tRNA + AH2 + ATP = 2-thiouridine(34) in tRNA + L-cysteinyl-[protein] + A + AMP + diphosphate + H(+). Catalyzes the 2-thiolation of uridine at the wobble position (U34) of tRNA, leading to the formation of s(2)U34. The protein is tRNA-specific 2-thiouridylase MnmA of Dehalococcoides mccartyi (strain ATCC BAA-2266 / KCTC 15142 / 195) (Dehalococcoides ethenogenes (strain 195)).